The following is a 124-amino-acid chain: Small ribosomal subunit protein uS12 (124 aa).

The tract at residues methionine 1–glutamate 25 is disordered. Aspartate 89 bears the 3-methylthioaspartic acid mark. Positions threonine 104–serine 124 are disordered. A compositionally biased stretch (basic residues) spans lysine 111 to serine 124.

The protein belongs to the universal ribosomal protein uS12 family. In terms of assembly, part of the 30S ribosomal subunit. Contacts proteins S8 and S17. May interact with IF1 in the 30S initiation complex.

In terms of biological role, with S4 and S5 plays an important role in translational accuracy. Its function is as follows. Interacts with and stabilizes bases of the 16S rRNA that are involved in tRNA selection in the A site and with the mRNA backbone. Located at the interface of the 30S and 50S subunits, it traverses the body of the 30S subunit contacting proteins on the other side and probably holding the rRNA structure together. The combined cluster of proteins S8, S12 and S17 appears to hold together the shoulder and platform of the 30S subunit. The protein is Small ribosomal subunit protein uS12 of Solibacter usitatus (strain Ellin6076).